The following is a 64-amino-acid chain: Large ribosomal subunit protein bL35 (64 aa).

Residues 1–26 (MPKMKTKSAAAKRFKTTKSGKIKRKQ) are compositionally biased toward basic residues. Positions 1 to 46 (MPKMKTKSAAAKRFKTTKSGKIKRKQAYTSHLAPNKTTKQKRHLRK) are disordered.

The protein belongs to the bacterial ribosomal protein bL35 family.

This is Large ribosomal subunit protein bL35 from Mycoplasmoides gallisepticum (strain R(low / passage 15 / clone 2)) (Mycoplasma gallisepticum).